Here is a 234-residue protein sequence, read N- to C-terminus: Proteasome subunit alpha (234 aa).

The protein belongs to the peptidase T1A family. As to quaternary structure, the 20S proteasome core is composed of 14 alpha and 14 beta subunits that assemble into four stacked heptameric rings, resulting in a barrel-shaped structure. The two inner rings, each composed of seven catalytic beta subunits, are sandwiched by two outer rings, each composed of seven alpha subunits. The catalytic chamber with the active sites is on the inside of the barrel. Has a gated structure, the ends of the cylinder being occluded by the N-termini of the alpha-subunits. Is capped by the proteasome-associated ATPase, ARC.

The protein localises to the cytoplasm. The protein operates within protein degradation; proteasomal Pup-dependent pathway. The formation of the proteasomal ATPase ARC-20S proteasome complex, likely via the docking of the C-termini of ARC into the intersubunit pockets in the alpha-rings, may trigger opening of the gate for substrate entry. Interconversion between the open-gate and close-gate conformations leads to a dynamic regulation of the 20S proteasome proteolysis activity. In terms of biological role, component of the proteasome core, a large protease complex with broad specificity involved in protein degradation. In Acidothermus cellulolyticus (strain ATCC 43068 / DSM 8971 / 11B), this protein is Proteasome subunit alpha.